The chain runs to 77 residues: UPF0349 protein lin2491 (77 aa).

Belongs to the UPF0349 family.

This chain is UPF0349 protein lin2491, found in Listeria innocua serovar 6a (strain ATCC BAA-680 / CLIP 11262).